Reading from the N-terminus, the 60-residue chain is Small integral membrane protein 3 (60 aa).

A helical membrane pass occupies residues 20–40 (IWAIVLIILATVVIMTSLFLC).

The protein localises to the membrane. The protein is Small integral membrane protein 3 (Smim3) of Rattus norvegicus (Rat).